Here is a 397-residue protein sequence, read N- to C-terminus: Putative 3'(2'),5'-bisphosphate nucleotidase, mitochondrial (397 aa).

The transit peptide at 1-16 (MYILDTGARFSAVRFS) directs the protein to the mitochondrion. The Proton acceptor role is filled by Asp91. Residues Glu114, Asp174, Ile176, and Asp177 each contribute to the Mg(2+) site. Catalysis depends on Thr179, which acts as the Proton acceptor. Thr179, Ser305, Lys308, and Asp334 together coordinate adenosine 3',5'-bisphosphate. Ser305, Lys308, and Asp334 together coordinate AMP. Asp334 serves as a coordination point for Mg(2+).

Belongs to the inositol monophosphatase superfamily. Requires Mg(2+) as cofactor.

The protein resides in the mitochondrion. It catalyses the reaction 3'-phosphoadenylyl sulfate + H2O = adenosine 5'-phosphosulfate + phosphate. It carries out the reaction adenosine 3',5'-bisphosphate + H2O = AMP + phosphate. The catalysed reaction is adenosine 2',5'-bisphosphate + H2O = AMP + phosphate. Its function is as follows. Phosphatase that converts adenosine 3'-phosphate 5'-phosphosulfate (PAPS) to adenosine 5'-phosphosulfate (APS) and 3'(2')-phosphoadenosine 5'-phosphate (PAP) to AMP. This chain is Putative 3'(2'),5'-bisphosphate nucleotidase, mitochondrial, found in Arabidopsis thaliana (Mouse-ear cress).